The chain runs to 689 residues: Elongation factor G (689 aa).

Residues 9-283 enclose the tr-type G domain; that stretch reads AKFRNIGIMA…AIIEFMPSPL (275 aa). GTP contacts are provided by residues 18–25, 82–86, and 136–139; these read AHIDAGKT, DTPGH, and NKMD.

It belongs to the TRAFAC class translation factor GTPase superfamily. Classic translation factor GTPase family. EF-G/EF-2 subfamily.

The protein resides in the cytoplasm. Catalyzes the GTP-dependent ribosomal translocation step during translation elongation. During this step, the ribosome changes from the pre-translocational (PRE) to the post-translocational (POST) state as the newly formed A-site-bound peptidyl-tRNA and P-site-bound deacylated tRNA move to the P and E sites, respectively. Catalyzes the coordinated movement of the two tRNA molecules, the mRNA and conformational changes in the ribosome. This Clostridium botulinum (strain 657 / Type Ba4) protein is Elongation factor G.